Here is a 287-residue protein sequence, read N- to C-terminus: Large ribosomal subunit protein uL2 (287 aa).

The disordered stretch occupies residues 221-287 (RGSVMNPCDH…SKRSRGGRDS (67 aa)). A compositionally biased stretch (basic residues) spans 258–287 (KTRKKNKPSNKLVVRRRRRISKRSRGGRDS).

Belongs to the universal ribosomal protein uL2 family. As to quaternary structure, part of the 50S ribosomal subunit. Forms a bridge to the 30S subunit in the 70S ribosome.

One of the primary rRNA binding proteins. Required for association of the 30S and 50S subunits to form the 70S ribosome, for tRNA binding and peptide bond formation. It has been suggested to have peptidyltransferase activity; this is somewhat controversial. Makes several contacts with the 16S rRNA in the 70S ribosome. In Prochlorococcus marinus (strain MIT 9301), this protein is Large ribosomal subunit protein uL2.